The primary structure comprises 428 residues: Proteinase-activated receptor 1 (428 aa).

The first 21 residues, 1–21 (MGPQRLLLVAAGLSLCGPLLS), serve as a signal peptide directing secretion. Positions 22-41 (SRVPVRQPESEMTDATVNPR) are cleaved as a propeptide — removed for receptor activation. The Extracellular portion of the chain corresponds to 42-105 (SFFLRNPGEN…SGYLTSPWLR (64 aa)). 2 N-linked (GlcNAc...) asparagine glycosylation sites follow: Asn-65 and Asn-78. Residues 106–131 (LFIPSVYTFVFVVSLPLNILAIAVFV) traverse the membrane as a helical segment. Over 132 to 140 (LKMKVKKPA) the chain is Cytoplasmic. Residues 141 to 160 (VVYMLHLAMADVLFVSVLPL) form a helical membrane-spanning segment. Residues 161 to 179 (KISYYFSGSDWQFGSGMCR) are Extracellular-facing. Residues Cys-178 and Cys-257 are joined by a disulfide bond. The helical transmembrane segment at 180–201 (FATAAFYCNMYASIMLMTVISI) threads the bilayer. The Cytoplasmic portion of the chain corresponds to 202–221 (DRFLAVVYPIQSLSWRTLGR). The helical transmembrane segment at 222–242 (ANFTCLVIWVMAIMGVVPLLL) threads the bilayer. At 243-271 (KEQTTRVPGLNITTCHDVLNETLLQGFYS) the chain is on the extracellular side. N-linked (GlcNAc...) asparagine glycans are attached at residues Asn-253 and Asn-262. A helical membrane pass occupies residues 272-291 (YYFSAFSAVFFLVPLIISTI). At 292-314 (CYMSIIRCLSSSSVANRSKKSRA) the chain is on the cytoplasmic side. The chain crosses the membrane as a helical span at residues 315 to 337 (LFLSAAVFCVFIVCFGPTNVLLI). Over 338 to 352 (MHYLLLSDSPATEKA) the chain is Extracellular. Residues 353 to 377 (YFAYLLCVCVSSVSCCIDPLIYYYA) traverse the membrane as a helical segment. Over 378–428 (SSECQRHLYGILCCKESSDPNSYNSTGQLMPSKMDTCSSHLNNSIYKKLLA) the chain is Cytoplasmic. Ser-421 carries the phosphoserine modification.

This sequence belongs to the G-protein coupled receptor 1 family. Proteolytic cleavage by thrombin generates a new N-terminus that functions as a tethered ligand. Also proteolytically cleaved by cathepsin CTSG. In terms of processing, phosphorylated in the C-terminal tail; probably mediating desensitization prior to the uncoupling and internalization of the receptor.

It is found in the cell membrane. Its function is as follows. High affinity receptor that binds the activated thrombin, leading to calcium release from intracellular stores. The thrombin-activated receptor signaling pathway is mediated through PTX-insensitive G proteins, activation of phospholipase C resulting in the production of 1D-myo-inositol 1,4,5-trisphosphate (InsP3) which binds to InsP3 receptors causing calcium release from the stores. In astrocytes, the calcium released into the cytosol allows the Ca(2+)-dependent release of L-glutamate into the synaptic cleft through BEST1, that targets the neuronal postsynaptic GRIN2A/NMDAR receptor resulting in the synaptic plasticity regulation. May play a role in platelets activation and in vascular development. Mediates up-regulation of pro-inflammatory cytokines, such as MCP-1/CCL2 and IL6, triggered by coagulation factor Xa (F10) in cardiac fibroblasts and umbilical vein endothelial cells. The chain is Proteinase-activated receptor 1 from Cricetulus longicaudatus (Long-tailed dwarf hamster).